Consider the following 260-residue polypeptide: 14-3-3 protein 3 (260 aa).

The protein belongs to the 14-3-3 family. In terms of assembly, homodimer.

This is 14-3-3 protein 3 (TFT3) from Solanum lycopersicum (Tomato).